The sequence spans 406 residues: Tyrosine-specific transport system 2 (406 aa).

Transmembrane regions (helical) follow at residues 7–27 (FGSA…AMPL), 38–58 (LLLL…FVEV), 83–103 (IFAT…YITG), 119–139 (AMSL…FVVV), 150–170 (VLFI…LPKV), 183–203 (AFVV…VIMA), 219–239 (AILI…LATH), 279–299 (VFSS…VFEG), 314–334 (FVLT…YPEG), 335–355 (FITA…ILPI), and 376–396 (NFAL…PFLI).

This sequence belongs to the amino acid/polyamine transporter 2 family. Mtr/TnaB/TyrP permease subfamily.

It localises to the cell inner membrane. The catalysed reaction is L-tyrosine(in) + H(+)(in) = L-tyrosine(out) + H(+)(out). Transports tyrosine across the cytoplasmic membrane. The transport system is energized by the proton motive force. This Haemophilus influenzae (strain ATCC 51907 / DSM 11121 / KW20 / Rd) protein is Tyrosine-specific transport system 2 (tyrP-B).